Reading from the N-terminus, the 269-residue chain is GTP cyclohydrolase FolE2 (269 aa).

This sequence belongs to the GTP cyclohydrolase IV family.

The enzyme catalyses GTP + H2O = 7,8-dihydroneopterin 3'-triphosphate + formate + H(+). The protein operates within cofactor biosynthesis; 7,8-dihydroneopterin triphosphate biosynthesis; 7,8-dihydroneopterin triphosphate from GTP: step 1/1. Converts GTP to 7,8-dihydroneopterin triphosphate. This chain is GTP cyclohydrolase FolE2, found in Burkholderia thailandensis (strain ATCC 700388 / DSM 13276 / CCUG 48851 / CIP 106301 / E264).